The sequence spans 199 residues: Fe/S biogenesis protein NfuA (199 aa).

The [4Fe-4S] cluster site is built by C151 and C154.

Belongs to the NfuA family. In terms of assembly, homodimer. Requires [4Fe-4S] cluster as cofactor.

Involved in iron-sulfur cluster biogenesis. Binds a 4Fe-4S cluster, can transfer this cluster to apoproteins, and thereby intervenes in the maturation of Fe/S proteins. Could also act as a scaffold/chaperone for damaged Fe/S proteins. The chain is Fe/S biogenesis protein NfuA from Xanthomonas oryzae pv. oryzae (strain MAFF 311018).